A 189-amino-acid polypeptide reads, in one-letter code: Interferon alpha-G (189 aa).

Residues 1-23 (MAPAWSLLLALLLLSCNAICSLG) form the signal peptide. Intrachain disulfides connect Cys-24–Cys-122 and Cys-52–Cys-162.

The protein belongs to the alpha/beta interferon family.

Its subcellular location is the secreted. Functionally, produced by macrophages, IFN-alpha have antiviral activities. Interferon stimulates the production of two enzymes: a protein kinase and an oligoadenylate synthetase. In Bos taurus (Bovine), this protein is Interferon alpha-G (IFNAG).